Reading from the N-terminus, the 274-residue chain is NH(3)-dependent NAD(+) synthetase (274 aa).

46 to 53 contributes to the ATP binding site; that stretch reads GISGGQDS. Asp-52 serves as a coordination point for Mg(2+). Arg-140 contributes to the deamido-NAD(+) binding site. Residue Thr-160 coordinates ATP. Glu-165 serves as a coordination point for Mg(2+). The deamido-NAD(+) site is built by Lys-173 and Asp-180. The ATP site is built by Lys-189 and Thr-211. 260-261 is a deamido-NAD(+) binding site; sequence HK.

This sequence belongs to the NAD synthetase family. As to quaternary structure, homodimer.

It catalyses the reaction deamido-NAD(+) + NH4(+) + ATP = AMP + diphosphate + NAD(+) + H(+). Its pathway is cofactor biosynthesis; NAD(+) biosynthesis; NAD(+) from deamido-NAD(+) (ammonia route): step 1/1. Catalyzes the ATP-dependent amidation of deamido-NAD to form NAD. Uses ammonia as a nitrogen source. This is NH(3)-dependent NAD(+) synthetase from Streptococcus pyogenes serotype M3 (strain ATCC BAA-595 / MGAS315).